The chain runs to 572 residues: Hemagglutinin-neuraminidase (572 aa).

At 1–31 (MEYWKHTNHGKDACNELGTSMATHGNKITNK) the chain is on the intravirion side. Residues 32–52 (ITYILWTIILVLLSIIFIIVL) form a helical membrane-spanning segment. Over 53 to 572 (INSIKSEKAH…FKTEIPKSCS (520 aa)) the chain is Virion surface. Intrachain disulfides connect C190-C214 and C256-C269. The involved in neuraminidase activity stretch occupies residues 252–257 (NRKSCS). N-linked (GlcNAc...) asparagine; by host glycosylation is found at N308 and N351. 2 disulfides stabilise this stretch: C355–C469 and C463–C473. An N-linked (GlcNAc...) asparagine; by host glycan is attached at N523. The cysteines at positions 535 and 544 are disulfide-linked.

Belongs to the paramyxoviruses hemagglutinin-neuraminidase family. In terms of assembly, homotetramer; composed of disulfide-linked homodimers. Interacts with F protein trimer.

Its subcellular location is the virion membrane. It is found in the host cell membrane. The enzyme catalyses Hydrolysis of alpha-(2-&gt;3)-, alpha-(2-&gt;6)-, alpha-(2-&gt;8)- glycosidic linkages of terminal sialic acid residues in oligosaccharides, glycoproteins, glycolipids, colominic acid and synthetic substrates.. Its function is as follows. Attaches the virus to sialic acid-containing cell receptors and thereby initiating infection. Binding of HN protein to the receptor induces a conformational change that allows the F protein to trigger virion/cell membranes fusion. Functionally, neuraminidase activity ensures the efficient spread of the virus by dissociating the mature virions from the neuraminic acid containing glycoproteins. The protein is Hemagglutinin-neuraminidase (HN) of Homo sapiens (Human).